A 129-amino-acid chain; its full sequence is Fluoride-specific ion channel FluC 2 (129 aa).

4 helical membrane-spanning segments follow: residues Phe3–Trp23, Ala32–Ala52, Leu59–Phe79, and Gly90–Val110. Residues Gly71 and Thr74 each coordinate Na(+).

This sequence belongs to the fluoride channel Fluc/FEX (TC 1.A.43) family.

It localises to the cell membrane. The catalysed reaction is fluoride(in) = fluoride(out). With respect to regulation, na(+) is not transported, but it plays an essential structural role and its presence is essential for fluoride channel function. Its function is as follows. Fluoride-specific ion channel. Important for reducing fluoride concentration in the cell, thus reducing its toxicity. This Listeria monocytogenes serovar 1/2a (strain ATCC BAA-679 / EGD-e) protein is Fluoride-specific ion channel FluC 2.